A 159-amino-acid polypeptide reads, in one-letter code: Nutritionally-regulated adipose and cardiac-enriched protein homolog (159 aa).

Positions 1–67 (MKTAVHALSP…GDEPRRTTRH (67 aa)) are disordered. Composition is skewed to basic and acidic residues over residues 12-25 (SRPE…KNEE) and 50-63 (SPQE…EPRR). A helical membrane pass occupies residues 107–124 (LTACILLALALGMCCGQA).

The protein localises to the cell membrane. This is Nutritionally-regulated adipose and cardiac-enriched protein homolog (NRAC) from Bos taurus (Bovine).